A 150-amino-acid polypeptide reads, in one-letter code: SsrA-binding protein (150 aa).

Belongs to the SmpB family.

The protein resides in the cytoplasm. Required for rescue of stalled ribosomes mediated by trans-translation. Binds to transfer-messenger RNA (tmRNA), required for stable association of tmRNA with ribosomes. tmRNA and SmpB together mimic tRNA shape, replacing the anticodon stem-loop with SmpB. tmRNA is encoded by the ssrA gene; the 2 termini fold to resemble tRNA(Ala) and it encodes a 'tag peptide', a short internal open reading frame. During trans-translation Ala-aminoacylated tmRNA acts like a tRNA, entering the A-site of stalled ribosomes, displacing the stalled mRNA. The ribosome then switches to translate the ORF on the tmRNA; the nascent peptide is terminated with the 'tag peptide' encoded by the tmRNA and targeted for degradation. The ribosome is freed to recommence translation, which seems to be the essential function of trans-translation. The chain is SsrA-binding protein from Flavobacterium psychrophilum (strain ATCC 49511 / DSM 21280 / CIP 103535 / JIP02/86).